The following is a 92-amino-acid chain: Large ribosomal subunit protein bL25 (92 aa).

This sequence belongs to the bacterial ribosomal protein bL25 family. As to quaternary structure, part of the 50S ribosomal subunit; part of the 5S rRNA/L5/L18/L25 subcomplex. Contacts the 5S rRNA. Binds to the 5S rRNA independently of L5 and L18.

This is one of the proteins that binds to the 5S RNA in the ribosome where it forms part of the central protuberance. This Vibrio atlanticus (strain LGP32) (Vibrio splendidus (strain Mel32)) protein is Large ribosomal subunit protein bL25.